Reading from the N-terminus, the 447-residue chain is Tubulin beta-1 chain (447 aa).

8 residues coordinate GTP: Q11, E69, S138, G142, T143, G144, N204, and N226. E69 is a binding site for Mg(2+).

Belongs to the tubulin family. As to quaternary structure, dimer of alpha and beta chains. A typical microtubule is a hollow water-filled tube with an outer diameter of 25 nm and an inner diameter of 15 nM. Alpha-beta heterodimers associate head-to-tail to form protofilaments running lengthwise along the microtubule wall with the beta-tubulin subunit facing the microtubule plus end conferring a structural polarity. Microtubules usually have 13 protofilaments but different protofilament numbers can be found in some organisms and specialized cells. Mg(2+) serves as cofactor.

Its subcellular location is the cytoplasm. The protein resides in the cytoskeleton. Functionally, tubulin is the major constituent of microtubules, a cylinder consisting of laterally associated linear protofilaments composed of alpha- and beta-tubulin heterodimers. Microtubules grow by the addition of GTP-tubulin dimers to the microtubule end, where a stabilizing cap forms. Below the cap, tubulin dimers are in GDP-bound state, owing to GTPase activity of alpha-tubulin. The polypeptide is Tubulin beta-1 chain (benA) (Emericella nidulans (strain FGSC A4 / ATCC 38163 / CBS 112.46 / NRRL 194 / M139) (Aspergillus nidulans)).